We begin with the raw amino-acid sequence, 308 residues long: 4-hydroxy-tetrahydrodipicolinate synthase (308 aa).

T53 serves as a coordination point for pyruvate. Y141 acts as the Proton donor/acceptor in catalysis. K169 (schiff-base intermediate with substrate) is an active-site residue. A pyruvate-binding site is contributed by V209.

This sequence belongs to the DapA family. As to quaternary structure, homotetramer; dimer of dimers.

The protein localises to the cytoplasm. It catalyses the reaction L-aspartate 4-semialdehyde + pyruvate = (2S,4S)-4-hydroxy-2,3,4,5-tetrahydrodipicolinate + H2O + H(+). It participates in amino-acid biosynthesis; L-lysine biosynthesis via DAP pathway; (S)-tetrahydrodipicolinate from L-aspartate: step 3/4. In terms of biological role, catalyzes the condensation of (S)-aspartate-beta-semialdehyde [(S)-ASA] and pyruvate to 4-hydroxy-tetrahydrodipicolinate (HTPA). This chain is 4-hydroxy-tetrahydrodipicolinate synthase, found in Acidothermus cellulolyticus (strain ATCC 43068 / DSM 8971 / 11B).